The following is a 152-amino-acid chain: Xanthine-guanine phosphoribosyltransferase (152 aa).

5-phospho-alpha-D-ribose 1-diphosphate is bound by residues 37 to 38, arginine 69, and 88 to 96; these read RG and DDLVDTGGT. Arginine 69 serves as a coordination point for GMP. A Mg(2+)-binding site is contributed by aspartate 89. Guanine is bound by residues aspartate 92 and isoleucine 135. Positions 92 and 135 each coordinate xanthine. GMP-binding positions include 92-96 and 134-135; these read DTGGT and WI.

This sequence belongs to the purine/pyrimidine phosphoribosyltransferase family. XGPT subfamily. In terms of assembly, homotetramer. Mg(2+) serves as cofactor.

Its subcellular location is the cell inner membrane. The enzyme catalyses GMP + diphosphate = guanine + 5-phospho-alpha-D-ribose 1-diphosphate. It carries out the reaction XMP + diphosphate = xanthine + 5-phospho-alpha-D-ribose 1-diphosphate. The catalysed reaction is IMP + diphosphate = hypoxanthine + 5-phospho-alpha-D-ribose 1-diphosphate. It functions in the pathway purine metabolism; GMP biosynthesis via salvage pathway; GMP from guanine: step 1/1. The protein operates within purine metabolism; XMP biosynthesis via salvage pathway; XMP from xanthine: step 1/1. Its function is as follows. Purine salvage pathway enzyme that catalyzes the transfer of the ribosyl-5-phosphate group from 5-phospho-alpha-D-ribose 1-diphosphate (PRPP) to the N9 position of the 6-oxopurines guanine and xanthine to form the corresponding ribonucleotides GMP (guanosine 5'-monophosphate) and XMP (xanthosine 5'-monophosphate), with the release of PPi. To a lesser extent, also acts on hypoxanthine. This Photobacterium profundum (strain SS9) protein is Xanthine-guanine phosphoribosyltransferase.